The sequence spans 115 residues: MKTFFRTVLFGSLMAVCANSYALSESEAEDMADLTAVFVFLKNDCGYQNLPNGQIRRALVFFAQQNQWDLSNYDTFDMKALGEDSYRDLSGIGIPVAKKCKALARDSLSLLAYVK.

Residues 1-20 (MKTFFRTVLFGSLMAVCANS) form the signal peptide.

This is an uncharacterized protein from Escherichia coli O6:H1 (strain CFT073 / ATCC 700928 / UPEC).